The sequence spans 474 residues: MSRLVVVSNRIAPPDEHAASAGGLAVGILGALKAAGGLWFGWSGETGNEDQPLKKVKKGNITWASFNLSEQDLDEYYNKFSNAVLWPAFHYRLDLVQFQRPAWDGYLRVNALLADKLLPLLQDDDIIWIHDYHLLPFAHELRKRGVNNRIGFFLHIPFPTPEIFNALPTYDTLLEQLCEYDLLGFQTENDRLAFLDCLSNLTRVTTRSAKSHTACGKAFRTEVYPIGIEPKEIAKQAAGPLPPKLAQLKAELKNVQNIFSVERLDYSKGLPERFLAYEALLEKYPQHHGKIRYTQIAPTSRGDVQAYQDIRHQLENEAGRINGKYGQLGWTPLYYLNQHFDRKLLMKIFRYSDVGLVTPLRDGMNLVAKEYVAAQDPANPGVLVLSQFAGAANELTSALIVNPYDRDEVAAALDRALTMSLAERISRHAEMLDVIVKNDINHWQECFISDLKQIVPRSAESQQRDKVATFPKLA.

Arg10 contacts D-glucose 6-phosphate. 22 to 23 (GG) lines the UDP-alpha-D-glucose pocket. Residues Tyr77 and Asp131 each coordinate D-glucose 6-phosphate. UDP-alpha-D-glucose contacts are provided by Arg263 and Lys268. A D-glucose 6-phosphate-binding site is contributed by Arg301. UDP-alpha-D-glucose-binding positions include Phe340 and 366 to 370 (LVAKE).

This sequence belongs to the glycosyltransferase 20 family. In terms of assembly, homotetramer.

It carries out the reaction D-glucose 6-phosphate + UDP-alpha-D-glucose = alpha,alpha-trehalose 6-phosphate + UDP + H(+). Its pathway is glycan biosynthesis; trehalose biosynthesis. Probably involved in the osmoprotection via the biosynthesis of trehalose. Catalyzes the transfer of glucose from UDP-alpha-D-glucose (UDP-Glc) to D-glucose 6-phosphate (Glc-6-P) to form trehalose-6-phosphate. Acts with retention of the anomeric configuration of the UDP-sugar donor. This Escherichia coli O1:K1 / APEC protein is Trehalose-6-phosphate synthase.